The following is a 161-amino-acid chain: Cap-associated protein CAF20 (161 aa).

Over residues 52-72 (HFGRRRSSHHHGRPKIKHNKP) the composition is skewed to basic residues. Residues 52 to 108 (HFGRRRSSHHHGRPKIKHNKPKVTTDSDGWCTFEAKKKGSGEDDEEETETTPTSTVP) form a disordered region. S78 and S91 each carry phosphoserine. Residues T99, T101, and T102 each carry the phosphothreonine modification. Phosphoserine is present on S154.

The protein belongs to the CAF20 family. In terms of assembly, interacts with TIF45. In terms of processing, phosphorylated by casein kinase II complex (CK2).

It localises to the cytoplasm. Its function is as follows. Acts as an inhibitor of cap-dependent translation. Competes with eIF4G1/TIF4631 and EAP1 for binding to eIF4E/TIF45 and interferes with the formation of the eIF4F complex, inhibiting translation and stabilizing mRNA. Binding affinity for eIF4E/TIF45 is 10-fold less than that of eIF4G1/TIF4631. Required for induction of pseudohyphal growth in response to nitrogen limitation, probably by regulating STE12 translation. This is Cap-associated protein CAF20 (CAF20) from Saccharomyces cerevisiae (strain YJM789) (Baker's yeast).